The sequence spans 259 residues: Phosphate import ATP-binding protein PstB 2 (259 aa).

Residues 12–254 (ISARGLNVHY…PKEPLTQGYI (243 aa)) form the ABC transporter domain. 44-51 (GPSGCGKS) is an ATP binding site.

It belongs to the ABC transporter superfamily. Phosphate importer (TC 3.A.1.7) family. The complex is composed of two ATP-binding proteins (PstB), two transmembrane proteins (PstC and PstA) and a solute-binding protein (PstS).

It localises to the cell inner membrane. The catalysed reaction is phosphate(out) + ATP + H2O = ADP + 2 phosphate(in) + H(+). Part of the ABC transporter complex PstSACB involved in phosphate import. Responsible for energy coupling to the transport system. The chain is Phosphate import ATP-binding protein PstB 2 from Paramagnetospirillum magneticum (strain ATCC 700264 / AMB-1) (Magnetospirillum magneticum).